Reading from the N-terminus, the 957-residue chain is ERC protein 2 (957 aa).

Over residues 1–13 (MYGSARTISNLEG) the composition is skewed to polar residues. The segment at 1-44 (MYGSARTISNLEGSPSRSPRLPRSPRLGHRRTSSGGGGGTGKTL) is disordered. Positions 14-25 (SPSRSPRLPRSP) are enriched in low complexity. A phosphoserine mark is found at Ser65 and Ser666. Positions 140-917 (RQVRDSTMLD…RMKLMADNYD (778 aa)) form a coiled coil. Residues 922 to 943 (HYHHHHHHHHHRSPGRSQHSNH) show a composition bias toward basic residues. Positions 922–957 (HYHHHHHHHHHRSPGRSQHSNHRPSPDQDDEEGIWA) are disordered. Over residues 948-957 (DQDDEEGIWA) the composition is skewed to acidic residues.

Interacts with BSN, ERC1, PPFIA1, PPFIA2, PPFIA3 and PPFIA4. Interacts through its C-terminus with the PDZ domain of RIMS1. Part of a complex consisting of ERC2, RIMS1 and UNC13A. Expressed throughout the central nervous system, including hippocampus, cortex, cerebellum and olfactory bulb.

It is found in the cytoplasm. The protein resides in the synapse. Its subcellular location is the presynaptic active zone. The protein localises to the cytoskeleton. Functionally, thought to be involved in the organization of the cytomatrix at the nerve terminals active zone (CAZ) which regulates neurotransmitter release. Seems to act together with BSN. May recruit liprin-alpha proteins to the CAZ. This chain is ERC protein 2 (Erc2), found in Mus musculus (Mouse).